Reading from the N-terminus, the 320-residue chain is Biotin synthase (320 aa).

The 229-residue stretch at 39 to 267 folds into the Radical SAM core domain; the sequence is NAIQLATLLS…KARVRLSAGR (229 aa). The [4Fe-4S] cluster site is built by Cys54, Cys58, and Cys61. 4 residues coordinate [2Fe-2S] cluster: Cys98, Cys130, Cys190, and Arg262.

This sequence belongs to the radical SAM superfamily. Biotin synthase family. As to quaternary structure, homodimer. Requires [4Fe-4S] cluster as cofactor. [2Fe-2S] cluster is required as a cofactor.

It carries out the reaction (4R,5S)-dethiobiotin + (sulfur carrier)-SH + 2 reduced [2Fe-2S]-[ferredoxin] + 2 S-adenosyl-L-methionine = (sulfur carrier)-H + biotin + 2 5'-deoxyadenosine + 2 L-methionine + 2 oxidized [2Fe-2S]-[ferredoxin]. It functions in the pathway cofactor biosynthesis; biotin biosynthesis; biotin from 7,8-diaminononanoate: step 2/2. Functionally, catalyzes the conversion of dethiobiotin (DTB) to biotin by the insertion of a sulfur atom into dethiobiotin via a radical-based mechanism. In Synechococcus elongatus (strain ATCC 33912 / PCC 7942 / FACHB-805) (Anacystis nidulans R2), this protein is Biotin synthase.